The primary structure comprises 325 residues: Elongation factor P--(R)-beta-lysine ligase (325 aa).

Position 76–78 (76–78 (SPE)) interacts with substrate. Residues 100–102 (RNE) and asparagine 109 contribute to the ATP site. Tyrosine 118 is a substrate binding site. 244 to 245 (EL) is a binding site for ATP. Glutamate 251 lines the substrate pocket. Glycine 300 is an ATP binding site.

The protein belongs to the class-II aminoacyl-tRNA synthetase family. EpmA subfamily. Homodimer.

It catalyses the reaction D-beta-lysine + L-lysyl-[protein] + ATP = N(6)-((3R)-3,6-diaminohexanoyl)-L-lysyl-[protein] + AMP + diphosphate + H(+). In terms of biological role, with EpmB is involved in the beta-lysylation step of the post-translational modification of translation elongation factor P (EF-P) on 'Lys-34'. Catalyzes the ATP-dependent activation of (R)-beta-lysine produced by EpmB, forming a lysyl-adenylate, from which the beta-lysyl moiety is then transferred to the epsilon-amino group of EF-P 'Lys-34'. The sequence is that of Elongation factor P--(R)-beta-lysine ligase from Escherichia coli O139:H28 (strain E24377A / ETEC).